A 94-amino-acid polypeptide reads, in one-letter code: Small ribosomal subunit protein uS17 (94 aa).

It belongs to the universal ribosomal protein uS17 family. In terms of assembly, part of the 30S ribosomal subunit.

One of the primary rRNA binding proteins, it binds specifically to the 5'-end of 16S ribosomal RNA. The chain is Small ribosomal subunit protein uS17 from Symbiobacterium thermophilum (strain DSM 24528 / JCM 14929 / IAM 14863 / T).